We begin with the raw amino-acid sequence, 607 residues long: Large ribosomal subunit assembly factor BipA (607 aa).

Residues 3–198 (ENLRNIAIIA…AIVDHVPAPD (196 aa)) form the tr-type G domain. GTP is bound by residues 15–20 (DHGKTT) and 128–131 (NKVD). The C-terminal domain (CTD), required but not sufficient to bind 70S or 30S ribosomes stretch occupies residues 481 to 607 (GQRQNGVLIS…RRANRGQKEE (127 aa)).

It belongs to the TRAFAC class translation factor GTPase superfamily. Classic translation factor GTPase family. BipA subfamily. Monomer.

It is found in the cytoplasm. The catalysed reaction is GTP + H2O = GDP + phosphate + H(+). Its activity is regulated as follows. Ribosome-associated GTPase is not affected by low levels of ppGpp, &gt;40 uM ppGpp and &gt;50 uM GDP inhibit GTPase. The C-terminus (residues 387-607 or 481-607) inhibits GTPase activity, in its absence kcat increases, but GTPase is no longer stimulated by 70S ribosome or 30S or 50S subunits. A 50S ribosomal subunit assembly protein with GTPase activity, required for 50S subunit assembly at low temperatures, may also play a role in translation. Binds GTP and analogs. Binds the 70S ribosome between the 30S and 50S subunits, in a similar position as ribosome-bound EF-G; it contacts a number of ribosomal proteins, both rRNAs and the A-site tRNA. A ribosome-stimulated GTPase, GTPase activity increases 4 fold in the presence of 70S ribosomes. Binds 70S ribosomes in the presence of GTP or its non-hydrolyzable analog GMPPNP; in the presence of ppGpp or under stress conditions it binds to 30S ribosomal subunits. The protein is Large ribosomal subunit assembly factor BipA of Salmonella typhimurium (strain LT2 / SGSC1412 / ATCC 700720).